We begin with the raw amino-acid sequence, 242 residues long: Tryptophan synthase alpha chain (242 aa).

Catalysis depends on proton acceptor residues Glu-32 and Asp-43.

Belongs to the TrpA family. Tetramer of two alpha and two beta chains.

The protein localises to the plastid. The protein resides in the chloroplast. The enzyme catalyses (1S,2R)-1-C-(indol-3-yl)glycerol 3-phosphate + L-serine = D-glyceraldehyde 3-phosphate + L-tryptophan + H2O. The protein operates within amino-acid biosynthesis; L-tryptophan biosynthesis; L-tryptophan from chorismate: step 5/5. The alpha subunit is responsible for the aldol cleavage of indoleglycerol phosphate to indole and glyceraldehyde 3-phosphate. The protein is Tryptophan synthase alpha chain of Cyanidium caldarium (Red alga).